Consider the following 790-residue polypeptide: Probable E3 ubiquitin-protein ligase MARCHF10 (790 aa).

Residues 33–240 (LKRQEHKKEP…PQNEPHTALS (208 aa)) are disordered. Positions 34 to 48 (KRQEHKKEPNEKKQE) are enriched in basic and acidic residues. The span at 61–70 (FSSGSSCKQS) shows a compositional bias: low complexity. A Phosphoserine modification is found at Ser78. Basic and acidic residues predominate over residues 218–227 (PLERQKKGDP). Residues 230-240 (RPQNEPHTALS) show a composition bias toward polar residues. A coiled-coil region spans residues 284–308 (LSLNNEQENYDTEEETRTEEELLLA). Disordered regions lie at residues 323 to 416 (GTSA…EDVS) and 507 to 569 (LSPI…RHLQ). Composition is skewed to polar residues over residues 355 to 370 (RKTS…SSPG), 406 to 416 (GVTQVSAEDVS), and 511 to 520 (RNRNPSAASE). Residues 521–533 (SHSEDTQGEEERA) are compositionally biased toward basic and acidic residues. Polar residues predominate over residues 534 to 563 (STSQAQESPLLSDLPNPQSSMALGDSPSSP). The RING-CH-type zinc finger occupies 633–703 (DSEEEGDLCR…EMCKQGLLVD (71 aa)). Residues Cys641, Cys644, Cys659, Cys661, His669, Cys672, Cys693, and Cys696 each contribute to the Zn(2+) site. Residues 757-790 (ERMSRNYPQPRPEESESSESGDGNESNVYPGRVI) form a disordered region. The segment covering 774-783 (SESGDGNESN) has biased composition (low complexity).

It carries out the reaction S-ubiquitinyl-[E2 ubiquitin-conjugating enzyme]-L-cysteine + [acceptor protein]-L-lysine = [E2 ubiquitin-conjugating enzyme]-L-cysteine + N(6)-ubiquitinyl-[acceptor protein]-L-lysine.. It functions in the pathway protein modification; protein ubiquitination. E3 ubiquitin-protein ligase. E3 ubiquitin ligases accept ubiquitin from an E2 ubiquitin-conjugating enzyme in the form of a thioester and then directly transfer the ubiquitin to targeted substrates. This chain is Probable E3 ubiquitin-protein ligase MARCHF10 (Marchf10), found in Rattus norvegicus (Rat).